A 361-amino-acid polypeptide reads, in one-letter code: Phosphoserine aminotransferase (361 aa).

Position 42 (arginine 42) interacts with L-glutamate. Residues 76 to 77, tryptophan 102, threonine 153, aspartate 173, and glutamine 196 each bind pyridoxal 5'-phosphate; that span reads AR. The residue at position 197 (lysine 197) is an N6-(pyridoxal phosphate)lysine. 238-239 is a pyridoxal 5'-phosphate binding site; sequence NT.

Belongs to the class-V pyridoxal-phosphate-dependent aminotransferase family. SerC subfamily. As to quaternary structure, homodimer. Pyridoxal 5'-phosphate serves as cofactor.

It localises to the cytoplasm. The enzyme catalyses O-phospho-L-serine + 2-oxoglutarate = 3-phosphooxypyruvate + L-glutamate. It catalyses the reaction 4-(phosphooxy)-L-threonine + 2-oxoglutarate = (R)-3-hydroxy-2-oxo-4-phosphooxybutanoate + L-glutamate. The protein operates within amino-acid biosynthesis; L-serine biosynthesis; L-serine from 3-phospho-D-glycerate: step 2/3. It participates in cofactor biosynthesis; pyridoxine 5'-phosphate biosynthesis; pyridoxine 5'-phosphate from D-erythrose 4-phosphate: step 3/5. In terms of biological role, catalyzes the reversible conversion of 3-phosphohydroxypyruvate to phosphoserine and of 3-hydroxy-2-oxo-4-phosphonooxybutanoate to phosphohydroxythreonine. The polypeptide is Phosphoserine aminotransferase (Yersinia pseudotuberculosis serotype IB (strain PB1/+)).